A 148-amino-acid polypeptide reads, in one-letter code: Large ribosomal subunit protein bL9 (148 aa).

The protein belongs to the bacterial ribosomal protein bL9 family.

Its function is as follows. Binds to the 23S rRNA. The chain is Large ribosomal subunit protein bL9 from Methylococcus capsulatus (strain ATCC 33009 / NCIMB 11132 / Bath).